A 130-amino-acid chain; its full sequence is Small ribosomal subunit protein uS8 (130 aa).

Belongs to the universal ribosomal protein uS8 family. In terms of assembly, part of the 30S ribosomal subunit.

Functionally, one of the primary rRNA binding proteins, it binds directly to 16S rRNA central domain where it helps coordinate assembly of the platform of the 30S subunit. The polypeptide is Small ribosomal subunit protein uS8 (Cenarchaeum symbiosum (strain A)).